The primary structure comprises 622 residues: MPKLEQRFDYVKIGLASPDRIRLWGERTLPNGQVVGEVTKPETINYRTLKPEMDGLFCERIFGPAKDWECHCGKYKRVRHRGIVCERCGVEVTESRVRRHRMGYIKLAAPVTHVWYLKGIPSYMATLLDMPLRDVEQIVYFNAYVVLNPGNHESLTYKQLLSEDQWIEIEDQIYSEDSQLVDIEVGIGAEAVQRLLQDLELETEAEALRSEIDVSKGQKRAKLIKRLRVIDNFIATGSRPDWMVLTVIPVIPPDLRPMVQLDGGRFATSDLNDLYRRVINRNNRLARLQEILAPEIIVRNEKRMLQEAVDALIDNGRRGRTVVGANNRPLKSLSDIIEGKQGRFRQNLLGKRVDYSGRSVIVVGPKLKMHQCGLPREMAIELFQPFVIHRLIRQGLVNNIKAAKRLIQRNDPIIWEVLEEVIDGHPVLLNRAPTLHRLGIQAFEPILVDGRAIQLHPLVCPAFNADFDGDQMAVHVPLSIESQAEARLLMLASNNILSPATGKPIVTPSQDMVLGCYYLTAENPKSQQGEGTYFASMNDVVMAYEQGQVELHAFIWVRYDGEVEDDDKGEPEIQTSGDGLVTHLYPSKRLRFDQDGKLISQYIRTTPGRIIYNKTIQESLAI.

The Zn(2+) site is built by Cys-70, Cys-72, Cys-85, and Cys-88. 3 residues coordinate Mg(2+): Asp-466, Asp-468, and Asp-470.

Belongs to the RNA polymerase beta' chain family. RpoC1 subfamily. In terms of assembly, in cyanobacteria the RNAP catalytic core is composed of 2 alpha, 1 beta, 1 beta', 1 gamma and 1 omega subunit. When a sigma factor is associated with the core the holoenzyme is formed, which can initiate transcription. Requires Mg(2+) as cofactor. It depends on Zn(2+) as a cofactor.

It carries out the reaction RNA(n) + a ribonucleoside 5'-triphosphate = RNA(n+1) + diphosphate. DNA-dependent RNA polymerase catalyzes the transcription of DNA into RNA using the four ribonucleoside triphosphates as substrates. The polypeptide is DNA-directed RNA polymerase subunit gamma (Cyanothece sp. (strain PCC 7425 / ATCC 29141)).